We begin with the raw amino-acid sequence, 212 residues long: uncharacterized protein (212 aa).

S-adenosyl-L-methionine is bound by residues glycine 53, glutamate 74, and aspartate 97.

It belongs to the methyltransferase superfamily. YrrT family.

Functionally, could be a S-adenosyl-L-methionine-dependent methyltransferase. This is an uncharacterized protein from Bacillus cytotoxicus (strain DSM 22905 / CIP 110041 / 391-98 / NVH 391-98).